Consider the following 187-residue polypeptide: Elongation factor P (187 aa).

This sequence belongs to the elongation factor P family.

The protein resides in the cytoplasm. It functions in the pathway protein biosynthesis; polypeptide chain elongation. In terms of biological role, involved in peptide bond synthesis. Stimulates efficient translation and peptide-bond synthesis on native or reconstituted 70S ribosomes in vitro. Probably functions indirectly by altering the affinity of the ribosome for aminoacyl-tRNA, thus increasing their reactivity as acceptors for peptidyl transferase. The sequence is that of Elongation factor P from Erythrobacter litoralis (strain HTCC2594).